A 345-amino-acid polypeptide reads, in one-letter code: Prenyltransferase ltmC (345 aa).

Residue His-112 participates in substrate binding. Residues Asp-119 and Asp-123 each coordinate Mg(2+). Arg-128 contacts substrate. Asn-130 is a glycosylation site (N-linked (GlcNAc...) asparagine). Lys-212, Thr-213, Gln-243, Asn-250, and Lys-260 together coordinate substrate.

This sequence belongs to the FPP/GGPP synthase family. Mg(2+) is required as a cofactor.

It participates in secondary metabolite biosynthesis. In terms of biological role, prenyltransferase; part of the gene cluster that mediates the biosynthesis of lolitrems, indole-diterpene mycotoxins that are potent tremorgens in mammals, and are synthesized by clavicipitaceous fungal endophytes in association with their grass hosts. The geranylgeranyl diphosphate (GGPP) synthase ltmG is proposed to catalyze the first step in lolitrem biosynthesis. LtmG catalyzes a series of iterative condensations of isopentenyl diphosphate (IPP) with dimethylallyl diphosphate (DMAPP), geranyl diphosphate (GPP), and farnesyl diphosphate (FPP), to form GGPP. GGPP then condenses with indole-3-glycerol phosphate to form 3-geranylgeranylindole, an acyclic intermediate, to be incorporated into paxilline. Either ltmG or ltmC could be responsible for this step, as both are putative prenyl transferases. The FAD-dependent monooxygenase ltmM then catalyzes the epoxidation of the two terminal alkenes of the geranylgeranyl moiety, which is subsequently cyclized by ltmB, to paspaline. The cytochrome P450 monooxygenases ltmQ and ltmP can sequentially oxidize paspaline to terpendole E and terpendole F. Alternatively, ltmP converts paspaline to an intermediate which is oxidized by ltmQ to terpendole F. LtmF, ltmK, ltmE and ltmJ appear to be unique to the epichloe endophytes. The prenyltransferase ltmF is involved in the 27-hydroxyl-O-prenylation. The cytochrome P450 monooxygenase ltmK is required for the oxidative acetal ring formation. The multi-functional prenyltransferase ltmE is required for C20- and C21-prenylations of the indole ring of paspalanes and acts together with the cytochrome P450 monooxygenase ltmJ to yield lolitremanes by multiple oxidations and ring closures. The stereoisomer pairs of lolitriol and lolitrem N or lolitrem B and lolitrem F may be attributed to variations in the way in which ring closure can occur under the action of ltmJ. While the major product of this pathway is lolitrem B, the prenyl transferases and cytochrome P450 monooxygenases identified in this pathway have a remarkable versatility in their regio- and stereo-specificities to generate a diverse range of metabolites that are products of a metabolic grid rather than a linear pathway. The chain is Prenyltransferase ltmC from Epichloe festucae var. lolii (Neotyphodium lolii).